The chain runs to 390 residues: NADH-quinone oxidoreductase subunit H (390 aa).

Helical transmembrane passes span 4 to 24 (WLLT…ALLT), 78 to 98 (LVYT…FGGI), 120 to 140 (VLAL…GGWA), 157 to 177 (MISY…LVGS), 191 to 211 (GWMI…SFAE), 247 to 266 (YVNM…GGWR), 278 to 298 (IADI…FVFI), 315 to 337 (FGWK…YIAF), and 341 to 360 (WGWW…LLAL).

This sequence belongs to the complex I subunit 1 family. NDH-1 is composed of 15 different subunits. Subunits NuoA, H, J, K, L, M, N constitute the membrane sector of the complex.

It is found in the cell membrane. It carries out the reaction a quinone + NADH + 5 H(+)(in) = a quinol + NAD(+) + 4 H(+)(out). Its function is as follows. NDH-1 shuttles electrons from NADH, via FMN and iron-sulfur (Fe-S) centers, to quinones in the respiratory chain. The immediate electron acceptor for the enzyme in this species is believed to be ubiquinone. Couples the redox reaction to proton translocation (for every two electrons transferred, four hydrogen ions are translocated across the cytoplasmic membrane), and thus conserves the redox energy in a proton gradient. This subunit may bind ubiquinone. This Deinococcus deserti (strain DSM 17065 / CIP 109153 / LMG 22923 / VCD115) protein is NADH-quinone oxidoreductase subunit H.